A 231-amino-acid polypeptide reads, in one-letter code: NADH-ubiquinone oxidoreductase chain 4 (231 aa).

Transmembrane regions (helical) follow at residues 1 to 21, 34 to 54, 61 to 80, 84 to 106, 128 to 148, and 169 to 189; these read PIAG…YGII, LFLP…LTCL, SLIA…AIII, WGLS…LFCL, ILPM…ATPP, and TIIL…HMFL.

Belongs to the complex I subunit 4 family.

The protein resides in the mitochondrion membrane. It catalyses the reaction a ubiquinone + NADH + 5 H(+)(in) = a ubiquinol + NAD(+) + 4 H(+)(out). Functionally, core subunit of the mitochondrial membrane respiratory chain NADH dehydrogenase (Complex I) that is believed to belong to the minimal assembly required for catalysis. Complex I functions in the transfer of electrons from NADH to the respiratory chain. The immediate electron acceptor for the enzyme is believed to be ubiquinone. The chain is NADH-ubiquinone oxidoreductase chain 4 (MT-ND4) from Metlapilcoatlus nummifer (Mexican jumping pitviper).